Here is a 436-residue protein sequence, read N- to C-terminus: UPF0597 protein YhaM (436 aa).

This sequence belongs to the UPF0597 family.

In Escherichia coli (strain K12 / MC4100 / BW2952), this protein is UPF0597 protein YhaM.